A 363-amino-acid polypeptide reads, in one-letter code: Zinc phosphodiesterase ELAC protein 1 (363 aa).

Zn(2+)-binding residues include H62, H64, D66, H67, H182, D253, and H313. D66 serves as the catalytic Proton acceptor.

This sequence belongs to the RNase Z family. As to quaternary structure, homodimer. Requires Zn(2+) as cofactor. In terms of tissue distribution, widely expressed. Expressed in heart, brain, placenta, lung, liver, skeletal muscle, kidney and pancreas.

It is found in the cytoplasm. The protein resides in the cytosol. The protein localises to the nucleus. It catalyses the reaction Endonucleolytic cleavage of RNA, removing extra 3' nucleotides from tRNA precursor, generating 3' termini of tRNAs. A 3'-hydroxy group is left at the tRNA terminus and a 5'-phosphoryl group is left at the trailer molecule.. Zinc phosphodiesterase, which displays some tRNA 3'-processing endonuclease activity. Specifically involved in tRNA repair: acts downstream of the ribosome-associated quality control (RQC) pathway by removing a 2',3'-cyclic phosphate from tRNAs following cleavage by ANKZF1. tRNAs are then processed by TRNT1. The protein is Zinc phosphodiesterase ELAC protein 1 of Homo sapiens (Human).